Consider the following 242-residue polypeptide: Ribonuclease PH (242 aa).

Phosphate contacts are provided by residues Arg-86 and 124-126 (GTR).

The protein belongs to the RNase PH family. In terms of assembly, homohexameric ring arranged as a trimer of dimers.

The enzyme catalyses tRNA(n+1) + phosphate = tRNA(n) + a ribonucleoside 5'-diphosphate. Functionally, phosphorolytic 3'-5' exoribonuclease that plays an important role in tRNA 3'-end maturation. Removes nucleotide residues following the 3'-CCA terminus of tRNAs; can also add nucleotides to the ends of RNA molecules by using nucleoside diphosphates as substrates, but this may not be physiologically important. Probably plays a role in initiation of 16S rRNA degradation (leading to ribosome degradation) during starvation. This Photorhabdus laumondii subsp. laumondii (strain DSM 15139 / CIP 105565 / TT01) (Photorhabdus luminescens subsp. laumondii) protein is Ribonuclease PH.